Here is a 116-residue protein sequence, read N- to C-terminus: PTS system galactose-specific EIIA component (116 aa).

Positions 11-109 (DDYMGVVMGI…AVEVVGQERR (99 aa)) constitute a PTS EIIA type-3 domain. Histidine 85 (tele-phosphohistidine intermediate) is an active-site residue. At histidine 85 the chain carries Phosphohistidine; by HPr. Aspartate 88 is a binding site for Mg(2+).

In terms of assembly, homotrimer. Requires Mg(2+) as cofactor.

Functionally, the phosphoenolpyruvate-dependent sugar phosphotransferase system (sugar PTS), a major carbohydrate active transport system, catalyzes the phosphorylation of incoming sugar substrates concomitantly with their translocation across the cell membrane. Involved in galactose transport with PtcB and Lmg_0963. This Lactococcus lactis subsp. cremoris (strain MG1363) protein is PTS system galactose-specific EIIA component.